The chain runs to 190 residues: RNA pyrophosphohydrolase (190 aa).

Residues 6–149 (GYRPNVGIIL…KRDVYTQALN (144 aa)) enclose the Nudix hydrolase domain. The Nudix box signature appears at 38–59 (GGIKYGESPVQAMYRELHEEVG). Residues 167-190 (QRVHGPRSTDSPSSETDGHAHIAG) form a disordered region.

Belongs to the Nudix hydrolase family. RppH subfamily. The cofactor is a divalent metal cation.

Its function is as follows. Accelerates the degradation of transcripts by removing pyrophosphate from the 5'-end of triphosphorylated RNA, leading to a more labile monophosphorylated state that can stimulate subsequent ribonuclease cleavage. In Bordetella pertussis (strain Tohama I / ATCC BAA-589 / NCTC 13251), this protein is RNA pyrophosphohydrolase.